The sequence spans 561 residues: Putative transport protein YbjL (561 aa).

The next 5 membrane-spanning stretches (helical) occupy residues 8–28, 32–52, 66–86, 94–114, and 158–178; these read LLNG…LCLG, LGSV…LLGQ, FMLF…SIFF, MLAL…GKLF, and NLSL…IVGA. RCK C-terminal domains are found at residues 200 to 288 and 292 to 373; these read RGLD…SFRN and VFDR…RIGF. 5 consecutive transmembrane segments (helical) span residues 383-403, 406-426, 447-467, 475-495, and 537-557; these read LLAF…TFQF, FSFG…LGFL, FGLM…INNG, MLIA…LFGA, and GTYA…VIIW.

The protein belongs to the AAE transporter (TC 2.A.81) family. YbjL subfamily.

It is found in the cell membrane. The protein is Putative transport protein YbjL of Salmonella choleraesuis (strain SC-B67).